Reading from the N-terminus, the 101-residue chain is Large ribosomal subunit protein uL24 (101 aa).

The protein belongs to the universal ribosomal protein uL24 family. Part of the 50S ribosomal subunit.

In terms of biological role, one of two assembly initiator proteins, it binds directly to the 5'-end of the 23S rRNA, where it nucleates assembly of the 50S subunit. Its function is as follows. One of the proteins that surrounds the polypeptide exit tunnel on the outside of the subunit. The protein is Large ribosomal subunit protein uL24 of Streptococcus thermophilus (strain CNRZ 1066).